The primary structure comprises 408 residues: Aminoacylase-1 (408 aa).

A Zn(2+)-binding site is contributed by His80. The active site involves Asp82. Asp113 lines the Zn(2+) pocket. Glu147 functions as the Proton acceptor in the catalytic mechanism. The Zn(2+) site is built by Glu148, Glu175, and His373.

The protein belongs to the peptidase M20A family. Homodimer. Interacts with SPHK1. The cofactor is Zn(2+).

Its subcellular location is the cytoplasm. It catalyses the reaction an N-acyl-L-amino acid + H2O = an L-alpha-amino acid + a carboxylate. The enzyme catalyses N-acetyl-L-methionine + H2O = L-methionine + acetate. It carries out the reaction N-acetyl-L-glutamine + H2O = L-glutamine + acetate. Its function is as follows. Catalyzes the hydrolysis of N-acetylated amino acids to acetate and free amino acids. This chain is Aminoacylase-1 (Acy1), found in Mus musculus (Mouse).